Consider the following 333-residue polypeptide: Mycothiol acetyltransferase (333 aa).

N-acetyltransferase domains are found at residues 18-170 (PTLS…LPEP) and 176-333 (VTVR…AAAD). 1D-myo-inositol 2-(L-cysteinylamino)-2-deoxy-alpha-D-glucopyranoside is bound at residue glutamate 46. 98-100 (IVV) contacts acetyl-CoA. 1D-myo-inositol 2-(L-cysteinylamino)-2-deoxy-alpha-D-glucopyranoside contacts are provided by glutamate 203, lysine 242, and glutamate 261. Acetyl-CoA contacts are provided by residues 265–267 (VGV) and 272–278 (GGAGLGR). Tyrosine 299 provides a ligand contact to 1D-myo-inositol 2-(L-cysteinylamino)-2-deoxy-alpha-D-glucopyranoside. 304 to 309 (NERAVR) serves as a coordination point for acetyl-CoA.

The protein belongs to the acetyltransferase family. MshD subfamily. Monomer.

The enzyme catalyses 1D-myo-inositol 2-(L-cysteinylamino)-2-deoxy-alpha-D-glucopyranoside + acetyl-CoA = mycothiol + CoA + H(+). Functionally, catalyzes the transfer of acetyl from acetyl-CoA to desacetylmycothiol (Cys-GlcN-Ins) to form mycothiol. The sequence is that of Mycothiol acetyltransferase from Frankia alni (strain DSM 45986 / CECT 9034 / ACN14a).